We begin with the raw amino-acid sequence, 399 residues long: Tryptophan synthase beta chain (399 aa).

K90 is subject to N6-(pyridoxal phosphate)lysine.

Belongs to the TrpB family. In terms of assembly, tetramer of two alpha and two beta chains. It depends on pyridoxal 5'-phosphate as a cofactor.

It catalyses the reaction (1S,2R)-1-C-(indol-3-yl)glycerol 3-phosphate + L-serine = D-glyceraldehyde 3-phosphate + L-tryptophan + H2O. It participates in amino-acid biosynthesis; L-tryptophan biosynthesis; L-tryptophan from chorismate: step 5/5. In terms of biological role, the beta subunit is responsible for the synthesis of L-tryptophan from indole and L-serine. The sequence is that of Tryptophan synthase beta chain from Bacillus pumilus (strain SAFR-032).